A 131-amino-acid polypeptide reads, in one-letter code: Small ribosomal subunit protein uS12c (131 aa).

Belongs to the universal ribosomal protein uS12 family. As to quaternary structure, part of the 30S ribosomal subunit.

The protein resides in the plastid. It localises to the chloroplast. In terms of biological role, with S4 and S5 plays an important role in translational accuracy. Located at the interface of the 30S and 50S subunits. The protein is Small ribosomal subunit protein uS12c (rps12) of Stigeoclonium helveticum (Green alga).